The sequence spans 266 residues: Zinc transporter ZupT (266 aa).

A run of 8 helical transmembrane segments spans residues 8-28 (LALT…ALMV), 35-55 (FLTF…FVEI), 70-90 (HAAG…IWLI), 123-143 (GIFT…AVFF), 152-172 (GVVI…AVAV), 185-205 (FSYS…GYAL), 209-229 (FLSP…MVYI), and 246-266 (IAIS…LMLA). Residues N134 and E137 each coordinate Fe(2+). Positions 137 and 162 each coordinate Zn(2+). Fe(2+) contacts are provided by N163, E166, and E195. E166 serves as a coordination point for Zn(2+).

The protein belongs to the ZIP transporter (TC 2.A.5) family. ZupT subfamily.

The protein localises to the cell inner membrane. The catalysed reaction is Zn(2+)(in) = Zn(2+)(out). Functionally, mediates zinc uptake. May also transport other divalent cations. This is Zinc transporter ZupT from Chlorobium limicola (strain DSM 245 / NBRC 103803 / 6330).